A 1161-amino-acid chain; its full sequence is MPSQVSRGLDTTNMLPISEEQQLQQQQQQQQLEQLHHPQIPEIPIPDLEQVETQVGDGSLWTALYDYDAQGEDELTLRRGEIVVVLSTDSEVSGDVGWWTGKIGDKVGVFPKDFVTDEDPLQLNVSSAIGDIQPHEIEYNELDIKEVIGSGGFCKVHRGYYDGEEVAIKIAHQTGEDDMQRMRDNVLQEAKLFWALKHENIAALRGVCLNTKLCLVMEYARGGSLNRILAGKIPPDVLVNWAIQIARGMNYLHNEAPMSIIHRDLKSSNVLIYEAIEGNHLQQKTLKITDFGLAREMYNTQRMSAAGTYAWMPPEVISVSTYSKFSDVWSYGVLLWELITGETPYKGFDPLSVAYGVAVNTLTLPIPKTCPETWGALMKSCWQTDPHKRPGFKEILKQLESIACSKFTLTPQESFHYMQECWRKEIAGVLHDLREKEKELRNKEEQLLRVQNEQREKANLLKIREQNLRERERVLIERELVMLQPVPSKRKHKKGKKNKPLQISLPTGFRHTITAVRDKAEQPGSPSFSGLRIVALTDGHKGKTWGPSTMHQRERSLLPSQLSGGQPEWPAQTSTHSSFSKSAPNLDKKQQQQNQQQVASLTPPPGLGILGGSGGAGGTPATPLLYPGIPIILTRPNNNNIGNCKAITTTITTTTTTTTNNNNNNNNSISANNNNQLNNISTINSNNNNNQTNLTSQPNTIIVLQNGRNNSNSSTTSQSPAKIYHRARSQEYGLDHPLAYQPPPLYLVTDDSSETDTVASPTGCFHFLKSGNSSAASGAVHLHRFGGSLGNSPAVGRKKHSLDSSSHHPPANGSNSFALPNQLTLPSEDNNTYDHAFYRDVIKKMSMASSERVNSKSSGDLTMYNSSTPLTARDCDDAEEAFEGGRFQRNFSGSQFPRHCFFTRQEEEGEAEDEDAVAAEVDTADADADDECQVPASQMRQNSTTSRKSSVTFQSVSFEEPDFVATPRTTARSDLYTSSASISFATYRSASPSLSSSSTTASASPSIASTEAVNGYHMQENSILNTRRMQDVQPHPDVIKLRAQEQRQQTKNQKKQRPKHITKSKSVEAPVEGQHHEHDDHNDPQHQHHSAGSSKIRALFNLFTRSRKKYSKLAEHNMVGGPEFCAIDPYQTDLAMGGSSRSLKRKGKKPQTQSCEQLERC.

Residues 56 to 120 (GDGSLWTALY…PKDFVTDEDP (65 aa)) form the SH3 domain. A Protein kinase domain is found at 142–402 (LDIKEVIGSG…KEILKQLESI (261 aa)). ATP contacts are provided by residues 148–156 (IGSGGFCKV) and lysine 169. The Proton acceptor role is filled by aspartate 264. At threonine 300 the chain carries Phosphothreonine; by autocatalysis. Serine 304 is modified (phosphoserine; by autocatalysis). 2 leucine-zipper regions span residues 426-447 (IAGV…EEQL) and 461-482 (LKIR…ELVM). Residues serine 525 and serine 560 each carry the phosphoserine modification. Disordered stretches follow at residues 560 to 615 (SQLS…GSGG) and 658 to 678 (TTNN…NQLN). Positions 571-583 (AQTSTHSSFSKSA) are enriched in polar residues. Low complexity predominate over residues 591-601 (QQQNQQQVASL). Phosphoserine is present on residues serine 685, serine 773, and serine 792. The interval 790–830 (GNSPAVGRKKHSLDSSSHHPPANGSNSFALPNQLTLPSEDN) is disordered. Residues 812–830 (NGSNSFALPNQLTLPSEDN) are compositionally biased toward polar residues. Threonine 862 is modified (phosphothreonine). Disordered regions lie at residues 988–1014 (RSAS…EAVN), 1045–1093 (EQRQ…SAGS), and 1137–1161 (GGSS…LERC). The span at 989-1010 (SASPSLSSSSTTASASPSIAST) shows a compositional bias: low complexity. Residue serine 993 is modified to Phosphoserine. Residues 1052–1063 (NQKKQRPKHITK) show a composition bias toward basic residues. Positions 1073-1086 (GQHHEHDDHNDPQH) are enriched in basic and acidic residues. Over residues 1150–1161 (PQTQSCEQLERC) the composition is skewed to polar residues.

Belongs to the protein kinase superfamily. STE Ser/Thr protein kinase family. MAP kinase kinase kinase subfamily. In terms of assembly, homodimer. Mg(2+) serves as cofactor. Post-translationally, autophosphorylation on serine and threonine residues within the activation loop plays a role in enzyme activation. Expressed both maternally and zygotically. Expressed uniformly in large quantities in the early embryo (stages 1-4). In the late embryo, expression is ubiquitous, but expression levels are dramatically reduced. Expressed in the adult head and thorax, and in S2 cells.

The enzyme catalyses L-seryl-[protein] + ATP = O-phospho-L-seryl-[protein] + ADP + H(+). It catalyses the reaction L-threonyl-[protein] + ATP = O-phospho-L-threonyl-[protein] + ADP + H(+). With respect to regulation, homodimerization via the leucine zipper domains is required for autophosphorylation and subsequent activation. Activated by C6-ceramide. Activates the JUN N-terminal pathway during dorsal closure. This Drosophila melanogaster (Fruit fly) protein is Mitogen-activated protein kinase kinase kinase.